The sequence spans 264 residues: Undecaprenyl-diphosphatase (264 aa).

8 consecutive transmembrane segments (helical) span residues Met1 to Ile21, Gln39 to Phe59, Ser83 to Phe103, Ser113 to Lys133, Val143 to Val163, Val181 to Leu201, Leu220 to Ile240, and Ser244 to Val264.

The protein belongs to the UppP family.

The protein resides in the cell inner membrane. It catalyses the reaction di-trans,octa-cis-undecaprenyl diphosphate + H2O = di-trans,octa-cis-undecaprenyl phosphate + phosphate + H(+). Functionally, catalyzes the dephosphorylation of undecaprenyl diphosphate (UPP). Confers resistance to bacitracin. This is Undecaprenyl-diphosphatase from Campylobacter curvus (strain 525.92).